The following is a 379-amino-acid chain: Armadillo repeat-containing X-linked protein 3 (379 aa).

The Mitochondrial intermembrane segment spans residues 1–6 (MGYARK). 2 mitochondrion outer membrane (MOM)-targeting sequence regions span residues 1–6 (MGYARK) and 26–37 (RLTRGRKQNKEK). The chain crosses the membrane as a helical; Signal-anchor span at residues 7–29 (VGWVTAGLVIGAGACYCIYRLTR). The Cytoplasmic portion of the chain corresponds to 30–379 (GRKQNKEKMA…TERMFPKSQE (350 aa)). A phosphoserine mark is found at Ser61, Ser67, and Ser72. Residues 89–98 (RARARARARA) are nuclear localization signal. The segment covering 95-106 (RARATRARRAVQ) has biased composition (basic residues). Positions 95–116 (RARATRARRAVQKRASPNSDDT) are disordered. A Phosphoserine modification is found at Ser110. ARM repeat units lie at residues 111 to 151 (PNSD…NNAA), 153 to 192 (AFNRDIIRDLGGLPIVAKILNTRDPIVKEKALIVLNNLSV), and 233 to 272 (VTNEYQHILANSISDFFRLFSAGNEETKLQVLKLLLNLAE).

It belongs to the eutherian X-chromosome-specific Armcx family. Interacts (via ARM domain) with MIRO1, MIRO2 and TRAK2. The interaction with Miro is calcium-dependent. Interacts with Sox10. Highly expressed in the developing neural tissues, neural crest derivatives and hind limbs. Also widely expressed in the adult nervous tissue, especially in the forebrain, including the cerebral cortex, hippocampus and thalamus.

It is found in the mitochondrion outer membrane. Its subcellular location is the cytoplasm. The protein localises to the nucleus. Regulates mitochondrial aggregation and transport in axons in living neurons. May link mitochondria to the Trak2-kinesin motor complex via its interaction with Miro and Trak2. Mitochondrial distribution and dynamics is regulated through Armcx3 protein degradation, which is promoted by PCK and negatively regulated by Wnt1. Enhances the Sox10-mediated transactivation of the neuronal acetylcholine receptor subunit alpha-3 and beta-4 subunit gene promoters. This chain is Armadillo repeat-containing X-linked protein 3 (Armcx3), found in Mus musculus (Mouse).